Here is a 771-residue protein sequence, read N- to C-terminus: Probable cation-transporting ATPase G (771 aa).

The HMA domain maps to 19 to 86 (GRMRVQATGF…AIIDAETVPA (68 aa)). A helical membrane pass occupies residues 72-92 (AAILSAIIDAETVPAAAVPAY). Residues 122 to 143 (DVAAQPSGETSDACCDGEDNED) are disordered. The next 5 helical transmembrane spans lie at 163–183 (VLLT…VVLG), 209–229 (VGVG…GELG), 330–350 (VFAG…ATAA), 387–407 (MIAA…LVWI), and 411–431 (LVVL…VTVV). Residue aspartate 462 is the 4-aspartylphosphate intermediate of the active site. Residues aspartate 651 and aspartate 655 each coordinate Mg(2+). Transmembrane regions (helical) follow at residues 657–677 (PALA…DVAI) and 716–736 (IITV…AVVL).

The protein belongs to the cation transport ATPase (P-type) (TC 3.A.3) family. Type IB subfamily.

The protein resides in the cell membrane. The catalysed reaction is ATP + H2O = ADP + phosphate + H(+). The polypeptide is Probable cation-transporting ATPase G (ctpG) (Mycobacterium bovis (strain ATCC BAA-935 / AF2122/97)).